The primary structure comprises 190 residues: Heme-binding protein 1 (190 aa).

The protein belongs to the HEBP family. In terms of assembly, monomer. As to expression, ubiquitously expressed. Extremely abundant in liver.

The protein localises to the cytoplasm. Its function is as follows. May bind free porphyrinogens that may be present in the cell and thus facilitate removal of these potentially toxic compound. Binds with a high affinity to one molecule of heme or porphyrins. It binds metalloporphyrins, free porphyrins and N-methylprotoporphyrin with similar affinities. The chain is Heme-binding protein 1 (Hebp1) from Mus musculus (Mouse).